Here is a 332-residue protein sequence, read N- to C-terminus: Tetraacyldisaccharide 4'-kinase (332 aa).

Residue 58-65 (TVGGSGKT) participates in ATP binding.

It belongs to the LpxK family.

The enzyme catalyses a lipid A disaccharide + ATP = a lipid IVA + ADP + H(+). Its pathway is glycolipid biosynthesis; lipid IV(A) biosynthesis; lipid IV(A) from (3R)-3-hydroxytetradecanoyl-[acyl-carrier-protein] and UDP-N-acetyl-alpha-D-glucosamine: step 6/6. Functionally, transfers the gamma-phosphate of ATP to the 4'-position of a tetraacyldisaccharide 1-phosphate intermediate (termed DS-1-P) to form tetraacyldisaccharide 1,4'-bis-phosphate (lipid IVA). The sequence is that of Tetraacyldisaccharide 4'-kinase from Shewanella piezotolerans (strain WP3 / JCM 13877).